An 82-amino-acid polypeptide reads, in one-letter code: uncharacterized protein (82 aa).

It is found in the plastid. The protein localises to the chloroplast. This is an uncharacterized protein from Vicia faba (Broad bean).